The primary structure comprises 267 residues: 4-hydroxy-tetrahydrodipicolinate reductase (267 aa).

NAD(+) is bound by residues 8–13 (GAAGRM) and Asp-34. Residue Arg-35 participates in NADP(+) binding. NAD(+)-binding positions include 98-100 (GTT) and 122-125 (AANF). His-155 acts as the Proton donor/acceptor in catalysis. His-156 lines the (S)-2,3,4,5-tetrahydrodipicolinate pocket. Catalysis depends on Lys-159, which acts as the Proton donor. 165–166 (GT) contributes to the (S)-2,3,4,5-tetrahydrodipicolinate binding site.

It belongs to the DapB family.

The protein resides in the cytoplasm. The catalysed reaction is (S)-2,3,4,5-tetrahydrodipicolinate + NAD(+) + H2O = (2S,4S)-4-hydroxy-2,3,4,5-tetrahydrodipicolinate + NADH + H(+). It catalyses the reaction (S)-2,3,4,5-tetrahydrodipicolinate + NADP(+) + H2O = (2S,4S)-4-hydroxy-2,3,4,5-tetrahydrodipicolinate + NADPH + H(+). Its pathway is amino-acid biosynthesis; L-lysine biosynthesis via DAP pathway; (S)-tetrahydrodipicolinate from L-aspartate: step 4/4. Catalyzes the conversion of 4-hydroxy-tetrahydrodipicolinate (HTPA) to tetrahydrodipicolinate. This Pseudomonas putida (strain ATCC 700007 / DSM 6899 / JCM 31910 / BCRC 17059 / LMG 24140 / F1) protein is 4-hydroxy-tetrahydrodipicolinate reductase.